A 308-amino-acid chain; its full sequence is Ribonuclease Z (308 aa).

Zn(2+) is bound by residues His-61, His-63, Asp-65, His-66, His-142, Asp-211, and His-270. Catalysis depends on Asp-65, which acts as the Proton acceptor.

It belongs to the RNase Z family. As to quaternary structure, homodimer. Zn(2+) serves as cofactor.

It catalyses the reaction Endonucleolytic cleavage of RNA, removing extra 3' nucleotides from tRNA precursor, generating 3' termini of tRNAs. A 3'-hydroxy group is left at the tRNA terminus and a 5'-phosphoryl group is left at the trailer molecule.. Functionally, zinc phosphodiesterase, which displays some tRNA 3'-processing endonuclease activity. Probably involved in tRNA maturation, by removing a 3'-trailer from precursor tRNA. The protein is Ribonuclease Z of Clostridium beijerinckii (strain ATCC 51743 / NCIMB 8052) (Clostridium acetobutylicum).